Reading from the N-terminus, the 384-residue chain is Mannitol-1-phosphate 5-dehydrogenase (384 aa).

3–14 (AVHFGAGNIGRG) serves as a coordination point for NAD(+).

It belongs to the mannitol dehydrogenase family. As to quaternary structure, monomer.

The catalysed reaction is D-mannitol 1-phosphate + NAD(+) = beta-D-fructose 6-phosphate + NADH + H(+). This is Mannitol-1-phosphate 5-dehydrogenase (mtlD) from Enterococcus faecalis (strain ATCC 700802 / V583).